Consider the following 586-residue polypeptide: Proline--tRNA ligase (586 aa).

The protein belongs to the class-II aminoacyl-tRNA synthetase family. ProS type 1 subfamily. As to quaternary structure, homodimer.

It is found in the cytoplasm. The enzyme catalyses tRNA(Pro) + L-proline + ATP = L-prolyl-tRNA(Pro) + AMP + diphosphate. In terms of biological role, catalyzes the attachment of proline to tRNA(Pro) in a two-step reaction: proline is first activated by ATP to form Pro-AMP and then transferred to the acceptor end of tRNA(Pro). As ProRS can inadvertently accommodate and process non-cognate amino acids such as alanine and cysteine, to avoid such errors it has two additional distinct editing activities against alanine. One activity is designated as 'pretransfer' editing and involves the tRNA(Pro)-independent hydrolysis of activated Ala-AMP. The other activity is designated 'posttransfer' editing and involves deacylation of mischarged Ala-tRNA(Pro). The misacylated Cys-tRNA(Pro) is not edited by ProRS. The polypeptide is Proline--tRNA ligase (Leptospira biflexa serovar Patoc (strain Patoc 1 / Ames)).